The chain runs to 160 residues: Serine-protein kinase RsbW (160 aa).

This sequence belongs to the anti-sigma-factor family.

It carries out the reaction L-seryl-[protein] + ATP = O-phospho-L-seryl-[protein] + ADP + H(+). The catalysed reaction is L-threonyl-[protein] + ATP = O-phospho-L-threonyl-[protein] + ADP + H(+). In terms of biological role, negative regulator of sigma-B activity. Phosphorylates and inactivates its specific antagonist protein, RsbV. Upon phosphorylation of RsbV, RsbW is released and binds to sigma-B, thereby blocking its ability to form an RNA polymerase holoenzyme (E-sigma-B). This chain is Serine-protein kinase RsbW, found in Bacillus cereus (strain B4264).